The chain runs to 518 residues: Vesicular inhibitory amino acid transporter (518 aa).

Over 1–125 (MATLIRSKLS…WNVTNAIQGM (125 aa)) the chain is Cytoplasmic. A helical membrane pass occupies residues 126–146 (FVLGLPYAILHGGYLGLFLII). Residues 147-197 (FAAVVCCYTGKILIACLYEENEDGETVRVRDSYVDIANACCAPRFPKLGGR) lie on the Lumenal, vesicle side of the membrane. The helical transmembrane segment at 198–218 (VVNVAQIIELVMTCILYVVVS) threads the bilayer. At 219-258 (GNLMYNSFPNLPISQKSWSIMATAVLLPCAFLKNLKAVSK) the chain is on the cytoplasmic side. A helical membrane pass occupies residues 259 to 279 (FSLLCTVAHFVINILVIAYCL). Topologically, residues 280-298 (SRARDWAWDKVKFYIDVKK) are lumenal, vesicle. A helical membrane pass occupies residues 299 to 319 (FPISIGIIVFSYTSQIFLPSL). At 320–334 (EGNMQSPREFHCMMN) the chain is on the cytoplasmic side. A helical membrane pass occupies residues 335-355 (WTHIAACILKGLFALVAYLTW). Residues 356 to 376 (ADETKEVITDNLPSTIRAVVN) are Lumenal, vesicle-facing. Residues 377 to 397 (LFLVSKALLSYPLPFFAAVEV) traverse the membrane as a helical segment. Topologically, residues 398–431 (LEKSLFQEGARAFFPNCYGGDGRLKSWGLTLRCA) are cytoplasmic. The chain crosses the membrane as a helical span at residues 432–452 (LVVFTLLMAIYVPHFALLMGL). Residues 453–454 (TG) lie on the Lumenal, vesicle side of the membrane. The chain crosses the membrane as a helical span at residues 455–475 (SLTGAGLCFLLPSLFHLKLMW). Over 476–482 (RQLLWHQ) the chain is Cytoplasmic. A helical membrane pass occupies residues 483–503 (VFFDVSIFVIGSICSVSGFVH). Topologically, residues 504 to 518 (SLEGLIEAYAYNIED) are lumenal, vesicle.

It belongs to the amino acid/polyamine transporter 2 family. As to expression, initially expressed in late neurula stages in the anterior spinal cord. By early tailbud stages, expression extends posteriorly along the entire developing spinal cord and appears in the hindbrain. In late tailbud embryos, expressed in the forebrain, midbrain, hindbrain, spinal cord and retina. In swimming tadpoles, expressed in an extended and more intense pattern including interneurons.

The protein resides in the cytoplasmic vesicle membrane. The protein localises to the presynapse. The enzyme catalyses 4-aminobutanoate(out) + n H(+)(in) = 4-aminobutanoate(in) + n H(+)(out). It catalyses the reaction glycine(out) + n H(+)(in) = glycine(in) + n H(+)(out). It carries out the reaction beta-alanine(out) + n H(+)(in) = beta-alanine(in) + n H(+)(out). Antiporter that exchanges vesicular protons for cytosolic 4-aminobutanoate or to a lesser extend glycine, thus allowing their secretion from nerve terminals. The transport is equally dependent on the chemical and electrical components of the proton gradient. May also transport beta-alanine. Acidification of GABAergic synaptic vesicles is a prerequisite for 4-aminobutanoate uptake. The chain is Vesicular inhibitory amino acid transporter from Xenopus laevis (African clawed frog).